The chain runs to 247 residues: MLLEYIDEVYKSVEKIKATQIKNIQEAATLIANSLLKEEDSVFHVFGCGHSHMAAEELFYRAGGLACVNPILPSELMLHEGALKSSYYERNEDIIKLIFDRYDLRQEECIIIVSHSGRNGAPIEAAVEAKRRGLKVVAITSKEYKQKTFSRHSSGKFLEDIADIVIDNCGQYGDAALKIKKDTLEISFSPLSTVLNTVILNMIEAEIVFIMIKKNLVPPVFLSGNIEGAEEHNLKLIEKYKKRVKHL.

In terms of domain architecture, SIS spans 31-213 (IANSLLKEED…EAEIVFIMIK (183 aa)).

This sequence belongs to the UPF0309 family.

The protein is UPF0309 protein Teth39_1980 of Thermoanaerobacter pseudethanolicus (strain ATCC 33223 / 39E) (Clostridium thermohydrosulfuricum).